The primary structure comprises 78 residues: Large ribosomal subunit protein bL28 (78 aa).

The protein belongs to the bacterial ribosomal protein bL28 family.

In Gloeothece citriformis (strain PCC 7424) (Cyanothece sp. (strain PCC 7424)), this protein is Large ribosomal subunit protein bL28.